Reading from the N-terminus, the 346-residue chain is Probable electron transfer flavoprotein subunit alpha, mitochondrial (346 aa).

285–313 provides a ligand contact to FAD; the sequence is LYVAVGISGAIQHLAGMKESKMIVAINKD.

This sequence belongs to the ETF alpha-subunit/FixB family. As to quaternary structure, heterodimer of an alpha and a beta subunit. Requires FAD as cofactor.

It localises to the mitochondrion matrix. Functionally, the electron transfer flavoprotein serves as a specific electron acceptor for several dehydrogenases, including five acyl-CoA dehydrogenases, glutaryl-CoA and sarcosine dehydrogenase. It transfers the electrons to the main mitochondrial respiratory chain via ETF-ubiquinone oxidoreductase (ETF dehydrogenase). In Cryptococcus neoformans var. grubii (Filobasidiella neoformans var. grubii), this protein is Probable electron transfer flavoprotein subunit alpha, mitochondrial (ETF1).